Here is a 419-residue protein sequence, read N- to C-terminus: tRNA(Ile)-lysidine synthase (419 aa).

31–36 contributes to the ATP binding site; the sequence is SGGGDS.

It belongs to the tRNA(Ile)-lysidine synthase family.

The protein localises to the cytoplasm. It catalyses the reaction cytidine(34) in tRNA(Ile2) + L-lysine + ATP = lysidine(34) in tRNA(Ile2) + AMP + diphosphate + H(+). In terms of biological role, ligates lysine onto the cytidine present at position 34 of the AUA codon-specific tRNA(Ile) that contains the anticodon CAU, in an ATP-dependent manner. Cytidine is converted to lysidine, thus changing the amino acid specificity of the tRNA from methionine to isoleucine. In Ruegeria pomeroyi (strain ATCC 700808 / DSM 15171 / DSS-3) (Silicibacter pomeroyi), this protein is tRNA(Ile)-lysidine synthase.